The chain runs to 188 residues: Elongation factor P (188 aa).

It belongs to the elongation factor P family.

The protein localises to the cytoplasm. It functions in the pathway protein biosynthesis; polypeptide chain elongation. Functionally, involved in peptide bond synthesis. Stimulates efficient translation and peptide-bond synthesis on native or reconstituted 70S ribosomes in vitro. Probably functions indirectly by altering the affinity of the ribosome for aminoacyl-tRNA, thus increasing their reactivity as acceptors for peptidyl transferase. This chain is Elongation factor P, found in Rhodopseudomonas palustris (strain ATCC BAA-98 / CGA009).